Here is a 121-residue protein sequence, read N- to C-terminus: Large ribosomal subunit protein bL12 (121 aa).

Belongs to the bacterial ribosomal protein bL12 family. Homodimer. Part of the ribosomal stalk of the 50S ribosomal subunit. Forms a multimeric L10(L12)X complex, where L10 forms an elongated spine to which 2 to 4 L12 dimers bind in a sequential fashion. Binds GTP-bound translation factors.

Forms part of the ribosomal stalk which helps the ribosome interact with GTP-bound translation factors. Is thus essential for accurate translation. This chain is Large ribosomal subunit protein bL12, found in Erwinia tasmaniensis (strain DSM 17950 / CFBP 7177 / CIP 109463 / NCPPB 4357 / Et1/99).